The following is a 218-amino-acid chain: Cell division protein SepF (218 aa).

Residues 20–81 are disordered; it reads DDEYYDDRAP…GYRGGYADEP (62 aa). The span at 36-65 shows a compositional bias: basic and acidic residues; it reads PRFDDDYGRYDGRDYDDARSDSRGDLRGEP.

This sequence belongs to the SepF family. Homodimer. Interacts with FtsZ.

It is found in the cytoplasm. Functionally, cell division protein that is part of the divisome complex and is recruited early to the Z-ring. Probably stimulates Z-ring formation, perhaps through the cross-linking of FtsZ protofilaments. Its function overlaps with FtsA. This is Cell division protein SepF from Mycobacterium bovis (strain ATCC BAA-935 / AF2122/97).